Consider the following 568-residue polypeptide: Probable inactive poly [ADP-ribose] polymerase SRO1 (568 aa).

Residues Met1–Gly18 show a composition bias toward basic and acidic residues. Positions Met1 to Ser32 are disordered. A WWE domain is found at Arg77–Trp152. 2 disordered regions span residues Asp220 to Ser241 and Ile453 to Arg500. The PARP catalytic domain maps to Asp245–Ser463. In terms of domain architecture, RST spans Arg497–Gly568.

Interacts with DREB2A, DREB2B, DREB2C and NAC082. As to expression, expressed in young developing tissues, such as young leaves and flowers and root tips. In mature plants, expressed in vasculature of leaves and roots.

It is found in the nucleus matrix. Functionally, probable inactive ADP-ribosyltransferase that functions with RCD1 to regulate oxidative stress, hormonal and developmental responses. May regulate some stress-responsive genes. Seems to play a smaller developmental role than R. This Arabidopsis thaliana (Mouse-ear cress) protein is Probable inactive poly [ADP-ribose] polymerase SRO1 (SRO1).